We begin with the raw amino-acid sequence, 330 residues long: MLVVDAMGGDYAPREIVLGVQDFVEETGEKIVLVGRENEIKKELTKKGKSLGYIEIINADEVVTMEEKPTVAIKKKESSVWKGLQLVREGVAQGFFSAGNTGAVMASAVLCLGKINGIDRPAIITPLPTLTGQTFLIDAGANVDVKPENLFQFAVMAQVYLKTAYQIKNPRVALLSNGEEEGKGNDLIKKTFPILKEKISGFIGNIEGKDIFRGVADIIVADGFVGNIVLKTGEGLAESIFVLLKNEVFTGLRGSLGGFILRESLQKIKKRLDYAEYGGAPLLGVNGIVFIAHGRSRRLAVRNGLKVMTKTVESGFLAELIKGDFNVWKD.

This sequence belongs to the PlsX family. Homodimer. Probably interacts with PlsY.

It is found in the cytoplasm. The enzyme catalyses a fatty acyl-[ACP] + phosphate = an acyl phosphate + holo-[ACP]. Its pathway is lipid metabolism; phospholipid metabolism. Catalyzes the reversible formation of acyl-phosphate (acyl-PO(4)) from acyl-[acyl-carrier-protein] (acyl-ACP). This enzyme utilizes acyl-ACP as fatty acyl donor, but not acyl-CoA. The chain is Phosphate acyltransferase from Carboxydothermus hydrogenoformans (strain ATCC BAA-161 / DSM 6008 / Z-2901).